Consider the following 231-residue polypeptide: NADH-ubiquinone oxidoreductase chain 4 (231 aa).

7 helical membrane passes run 1–21 (PIAG…YGII), 34–54 (MFLP…LTCL), 63–85 (IAYS…TPWG), 89–111 (AMAL…NTTY), 128–148 (ILPM…ATPP), 169–189 (TIIL…HMFL), and 211–231 (LLMT…ELVI).

The protein belongs to the complex I subunit 4 family.

Its subcellular location is the mitochondrion membrane. The enzyme catalyses a ubiquinone + NADH + 5 H(+)(in) = a ubiquinol + NAD(+) + 4 H(+)(out). In terms of biological role, core subunit of the mitochondrial membrane respiratory chain NADH dehydrogenase (Complex I) that is believed to belong to the minimal assembly required for catalysis. Complex I functions in the transfer of electrons from NADH to the respiratory chain. The immediate electron acceptor for the enzyme is believed to be ubiquinone. This Porthidium ophryomegas (Slender hognose viper) protein is NADH-ubiquinone oxidoreductase chain 4 (MT-ND4).